The chain runs to 557 residues: MFKSDIEIAQESKMKNIKNIAEKIGLTEEDIDLYGKYKCKISLDVLKSNKDKKDGKLILVTAINPTPAGEGKSTVTVGLGQALWKKNKKAVIALREPSLGPVFGIKGGAAGGGYSQVVPMEDINLHFTGDMHAITSANNLLAAAIDNHIHQGNILKIDQRRILFKRVMDMNDRALRNVIVALGGKINGFPREDGFMITVASEIMAILCLAEDLMDLKNKMGEILVAYSIEGKPIYCKDLEVQGAMALLMKDAIKPNLVQTLENTPAIIHGGPFANIAHGCNSILGTKMALKLGDYVITEAGFGADLGAEKFFDIKCRKANLKPNCVVIVATVRALKYNGGILKENLKEQNMEALSKGIENLGKHIENVNKFGVPAVVAINKFISDTEEEIEFIKKYCKELGAEVSIAEVWEKGGNGGLELADKVLDTIENKESKFNPIYEETLNIKQKIETIAQEIYGAEGVDYSKEAEKQISEIEKLDLDKKPVCMAKTQYSLSDDAKLLGRPCGFRINVKEVRISNGAGFIVALTGNVMTMPGLPKKPAANNMNVLSDGNIVGLF.

Position 66–73 (66–73 (TPAGEGKS)) interacts with ATP.

Belongs to the formate--tetrahydrofolate ligase family.

The enzyme catalyses (6S)-5,6,7,8-tetrahydrofolate + formate + ATP = (6R)-10-formyltetrahydrofolate + ADP + phosphate. The protein operates within one-carbon metabolism; tetrahydrofolate interconversion. In Clostridium botulinum (strain 657 / Type Ba4), this protein is Formate--tetrahydrofolate ligase.